A 173-amino-acid chain; its full sequence is Transcription factor E (173 aa).

An HTH TFE/IIEalpha-type domain is found at 9 to 92; that stretch reads ADKAIFAYLH…LWELELDNMY (84 aa).

Belongs to the TFE family. In terms of assembly, monomer. Interaction with RNA polymerase subunits RpoF and RpoE is necessary for Tfe stimulatory transcription activity. Able to interact with Tbp and RNA polymerase in the absence of DNA promoter. Interacts both with the preinitiation and elongation complexes.

Transcription factor that plays a role in the activation of archaeal genes transcribed by RNA polymerase. Facilitates transcription initiation by enhancing TATA-box recognition by TATA-box-binding protein (Tbp), and transcription factor B (Tfb) and RNA polymerase recruitment. Not absolutely required for transcription in vitro, but particularly important in cases where Tbp or Tfb function is not optimal. It dynamically alters the nucleic acid-binding properties of RNA polymerases by stabilizing the initiation complex and destabilizing elongation complexes. Seems to translocate with the RNA polymerase following initiation and acts by binding to the non template strand of the transcription bubble in elongation complexes. In Methanospirillum hungatei JF-1 (strain ATCC 27890 / DSM 864 / NBRC 100397 / JF-1), this protein is Transcription factor E.